We begin with the raw amino-acid sequence, 562 residues long: Cytochrome c oxidase subunit 1 (562 aa).

A helical membrane pass occupies residues 21–41; it reads TLYFLVLGFLALIVGSLFGPF. His72 contacts Fe(II)-heme a. The next 8 helical transmembrane spans lie at 74-94, 105-125, 144-164, 187-207, 227-247, 267-287, 300-320, and 345-365; these read VLNA…YLPA, LMWL…LPLL, AFYL…YIVL, VVFW…AVLF, LFWW…YAII, LAFL…QFAD, VLTL…AASL, and AFVA…GGIV. Residues His233, Tyr237, His282, and His283 each coordinate Cu cation. A cross-link (1'-histidyl-3'-tyrosine (His-Tyr)) is located at residues 233–237; that stretch reads HPIVY. His384 serves as a coordination point for heme a3. 4 consecutive transmembrane segments (helical) span residues 385-405, 420-440, 471-491, and 527-547; these read FHLQ…YWLL, LGLA…VGLH, VLAG…LFSV, and IGFW…PTLV. His386 serves as a coordination point for Fe(II)-heme a.

This sequence belongs to the heme-copper respiratory oxidase family. Heme serves as cofactor. It depends on Cu cation as a cofactor.

Its subcellular location is the cell membrane. It carries out the reaction 4 Fe(II)-[cytochrome c] + O2 + 8 H(+)(in) = 4 Fe(III)-[cytochrome c] + 2 H2O + 4 H(+)(out). It participates in energy metabolism; oxidative phosphorylation. This is Cytochrome c oxidase subunit 1 (cbaA) from Thermus thermophilus (strain ATCC 27634 / DSM 579 / HB8).